Reading from the N-terminus, the 784-residue chain is ent-copalyl diphosphate synthase 2, chloroplastic (784 aa).

A chloroplast-targeting transit peptide spans 1–57 (MSMTLFASVTRPGLPGPTALRFPETRHLFHSVTAFAASFSPSKSSVGSSQCNATTPP). A substrate-binding site is contributed by K242. 2 residues coordinate Mg(2+): D379 and D381. The short motif at 379-382 (DIDD) is the DXDD motif element. K466 is a binding site for substrate.

The protein belongs to the terpene synthase family. Mg(2+) serves as cofactor. Present in both leaves and flowers.

It is found in the plastid. The protein localises to the chloroplast. The protein operates within plant hormone biosynthesis; gibberellin biosynthesis. It participates in secondary metabolite biosynthesis; terpenoid biosynthesis. In terms of biological role, involved in the biosynthesis of labdane-type diterpenoid including marrubiin and other labdane-related furanoid diterpenoids with potential applications as anti-diabetics, analgesics or vasorelaxants. May be involved in the conversion of geranylgeranyl diphosphate (GGPP) to ent-copalyl diphosphate (ent-CPP) and 8-hydroxycopalyl diphosphate (LPP, labda-13-en-8-ol diphosphate). This is ent-copalyl diphosphate synthase 2, chloroplastic from Marrubium vulgare (White horehound).